The following is a 121-amino-acid chain: Small ribosomal subunit protein bS6 (121 aa).

Positions 102–121 (MMRNVEREEARKAQQQEYAA) are disordered. Positions 105-115 (NVEREEARKAQ) are enriched in basic and acidic residues.

The protein belongs to the bacterial ribosomal protein bS6 family.

In terms of biological role, binds together with bS18 to 16S ribosomal RNA. The sequence is that of Small ribosomal subunit protein bS6 from Polaromonas sp. (strain JS666 / ATCC BAA-500).